A 233-amino-acid chain; its full sequence is Riboflavin kinase (233 aa).

Positions 1–99 (MSGATSTGDV…YRRIFEDPGE (99 aa)) are unknown. The segment at 100 to 233 (LALAGTVTSG…DDEVTIRVEA (134 aa)) is riboflavin kinase. A CDP-binding site is contributed by 109–114 (GMGEGR). Mg(2+) contacts are provided by Thr138 and Asn140. Thr200 and Glu208 together coordinate FMN. 213 to 216 (VKLR) is a binding site for CDP.

Belongs to the archaeal riboflavin kinase family. Requires Mg(2+) as cofactor.

The catalysed reaction is riboflavin + CTP = CDP + FMN + H(+). It participates in cofactor biosynthesis; FMN biosynthesis; FMN from riboflavin (CTP route): step 1/1. Catalyzes the CTP-dependent phosphorylation of riboflavin (vitamin B2) to form flavin mononucleotide (FMN). The sequence is that of Riboflavin kinase (ribK) from Halobacterium salinarum (strain ATCC 700922 / JCM 11081 / NRC-1) (Halobacterium halobium).